Consider the following 198-residue polypeptide: Na(+)-translocating NADH-quinone reductase subunit E (198 aa).

Helical transmembrane passes span 11–31 (SVFI…FLAV), 35–55 (VSTA…SVPV), 77–97 (FLNF…LEMI), 110–130 (GIFL…SFMV), 140–160 (IVYG…LAGI), and 176–196 (LGIT…FSGV).

The protein belongs to the NqrDE/RnfAE family. In terms of assembly, composed of six subunits; NqrA, NqrB, NqrC, NqrD, NqrE and NqrF.

It is found in the cell inner membrane. It carries out the reaction a ubiquinone + n Na(+)(in) + NADH + H(+) = a ubiquinol + n Na(+)(out) + NAD(+). Its function is as follows. NQR complex catalyzes the reduction of ubiquinone-1 to ubiquinol by two successive reactions, coupled with the transport of Na(+) ions from the cytoplasm to the periplasm. NqrA to NqrE are probably involved in the second step, the conversion of ubisemiquinone to ubiquinol. This is Na(+)-translocating NADH-quinone reductase subunit E from Histophilus somni (strain 2336) (Haemophilus somnus).